The sequence spans 303 residues: N-acetyl-D-glucosamine kinase (303 aa).

Residues 4 to 11 (GFDIGGTK) and 133 to 140 (GVGGGLVL) contribute to the ATP site. Residues H157, C177, C179, and C184 each contribute to the Zn(2+) site.

This sequence belongs to the ROK (NagC/XylR) family. NagK subfamily.

It catalyses the reaction N-acetyl-D-glucosamine + ATP = N-acetyl-D-glucosamine 6-phosphate + ADP + H(+). Its pathway is cell wall biogenesis; peptidoglycan recycling. In terms of biological role, catalyzes the phosphorylation of N-acetyl-D-glucosamine (GlcNAc) derived from cell-wall degradation, yielding GlcNAc-6-P. This Salmonella gallinarum (strain 287/91 / NCTC 13346) protein is N-acetyl-D-glucosamine kinase.